The chain runs to 506 residues: MNESNCTKIVNFLKGMRLKTNPNLPGAKQKTPLNIHRFYLLLIIIIYTATSACIYFDWTSIRNLLLNVGKYEHLNISKYADITLSPQYKKINNLYPMTLAIHFTMSVFCGFLYDHIGPKFTAIIGQGFNILSWIFLSIDTTKIDTTLIGFIFLGLGADTAFIPILTVSNLFPDISTFIMTVIGAAASLSYAVPATLNFVYKKYPHFPFYYICYGYIFIILIPCLLVATFLLPMKPFKGLDYYLENDQESDSKNKEQISYTDNDVEMQPSLIQNGNTNVSNNVNKNKATKNIIEGENFHKQSILLFFKVLLSYPSICIIVYFILFNISTVFYGMVTDIYFSYNKSIINIINILMPISFIPCIIFGRFINKYGAAIIIIIMNAFSALMHLTALIKHQAAGLISAFLYMCAASIYTSQIYCFLLNAFPSVVFGKLLGITSLFGGMFSLFCEKLYDNISNSSGNKNDPTTISILLAISFIIMFLPLSILYTRNYEKNIESVNSEKNQIQA.

Residues N2 and N5 are each glycosylated (N-linked (GlcNAc...) asparagine). Residues 38–58 (FYLLLIIIIYTATSACIYFDW) traverse the membrane as a helical segment. N75 carries N-linked (GlcNAc...) asparagine glycosylation. 5 helical membrane-spanning segments follow: residues 93–113 (NLYP…GFLY), 116–136 (IGPK…WIFL), 147–167 (LIGF…ILTV), 174–194 (ISTF…AVPA), and 211–231 (ICYG…TFLL). N277 is a glycosylation site (N-linked (GlcNAc...) asparagine). The chain crosses the membrane as a helical span at residues 302-322 (ILLFFKVLLSYPSICIIVYFI). N-linked (GlcNAc...) asparagine glycosylation is found at N325 and N342. The next 4 membrane-spanning stretches (helical) occupy residues 344-364 (SIIN…IIFG), 372-392 (AAII…TALI), 399-419 (LISA…IYCF), and 427-447 (VVFG…SLFC). Residues N453 and N456 are each glycosylated (N-linked (GlcNAc...) asparagine). The helical transmembrane segment at 466–486 (TISILLAISFIIMFLPLSILY) threads the bilayer.

This sequence belongs to the SLC43A transporter (TC 2.A.1.44) family.

The protein localises to the cell membrane. In terms of biological role, cationic amino acid transporter which transports L-arginine, L-lysine and, to a lesser extent, L-histidine and ornithine. Plays an essential role in gametogenesis. The chain is Cationic amino acid transporter 8 from Plasmodium berghei (strain Anka).